A 230-amino-acid chain; its full sequence is Large ribosomal subunit protein uL1 (230 aa).

It belongs to the universal ribosomal protein uL1 family. As to quaternary structure, part of the 50S ribosomal subunit.

Functionally, binds directly to 23S rRNA. The L1 stalk is quite mobile in the ribosome, and is involved in E site tRNA release. Its function is as follows. Protein L1 is also a translational repressor protein, it controls the translation of the L11 operon by binding to its mRNA. The sequence is that of Large ribosomal subunit protein uL1 from Lactobacillus acidophilus (strain ATCC 700396 / NCK56 / N2 / NCFM).